Consider the following 1288-residue polypeptide: Disease resistance protein RRS1 (1288 aa).

In terms of domain architecture, TIR spans 5-146 (EKDEEFVCIS…EIVRDVYETH (142 aa)). Positions 25 to 26 (SH) are important for interaction with RPS4. The region spanning 170-421 (IGIRCVGIWG…LLEGCGFFPH (252 aa)) is the NB-ARC domain. 179–186 (GMPGIGKT) contributes to the ATP binding site. LRR repeat units lie at residues 498–522 (SEEI…AFKN), 535–553 (NPEV…HSLP), 554–575 (NELR…NFDP), 577–598 (HLVE…TKNL), 621–646 (AENL…RLLR), 665–688 (PPNI…TVKP), 697–720 (LTEI…NSSC), 740–764 (LPNM…SIQG), 766–791 (PRFL…SLEI), 792–807 (LNAH…NMAN), 808–829 (LEFL…QGFP), and 830–852 (RNLK…PLSL). The Nuclear localization signal signature appears at 986–1003 (RKFHCWAPWQVVPKVRKD). Positions 1202-1270 (IPAIDEGDLW…YLSEHNHPRP (69 aa)) form a DNA-binding region, WRKY. Residues 1267-1288 (HPRPTKRKALADSTRSTSSSIC) form a disordered region. Residues 1279 to 1288 (STRSTSSSIC) are compositionally biased toward polar residues.

It belongs to the disease resistance TIR-NB-LRR family. Interacts with PopP2, a R.solanacearum type III effector. Interacts with RPS4.

The protein localises to the nucleus. It is found in the cytoplasm. Its function is as follows. Transcription factor. Interacts specifically with the W box (5'-(T)TGAC[CT]-3'), a frequently occurring elicitor-responsive cis-acting element. Also acts as a disease resistance protein involved in resistance to fungal and bacterial pathogens, including R.solanacearum, P.syringae pv. tomato and C.higginsianum. Heterodimerization with RPS4 is required to form a functional complex to recognize AvrRps4 and PopP2. Contributes to temperature-conditioned RPS4 auto-immunity. The chain is Disease resistance protein RRS1 from Arabidopsis thaliana (Mouse-ear cress).